The chain runs to 306 residues: Ornithine carbamoyltransferase (306 aa).

Residues 54–57 (STRT), Gln-81, Arg-105, and 132–135 (HPLQ) each bind carbamoyl phosphate. Residues Asn-162, Asp-226, and 230–231 (SM) contribute to the L-ornithine site. Carbamoyl phosphate is bound by residues 266–267 (CL) and Arg-294.

This sequence belongs to the aspartate/ornithine carbamoyltransferase superfamily. OTCase family.

It is found in the cytoplasm. It catalyses the reaction carbamoyl phosphate + L-ornithine = L-citrulline + phosphate + H(+). It functions in the pathway amino-acid biosynthesis; L-arginine biosynthesis; L-arginine from L-ornithine and carbamoyl phosphate: step 1/3. In terms of biological role, reversibly catalyzes the transfer of the carbamoyl group from carbamoyl phosphate (CP) to the N(epsilon) atom of ornithine (ORN) to produce L-citrulline. The protein is Ornithine carbamoyltransferase of Sulfurisphaera tokodaii (strain DSM 16993 / JCM 10545 / NBRC 100140 / 7) (Sulfolobus tokodaii).